Reading from the N-terminus, the 147-residue chain is 3-hydroxyacyl-[acyl-carrier-protein] dehydratase FabZ (147 aa).

Residue H49 is part of the active site.

Belongs to the thioester dehydratase family. FabZ subfamily.

Its subcellular location is the cytoplasm. It carries out the reaction a (3R)-hydroxyacyl-[ACP] = a (2E)-enoyl-[ACP] + H2O. Functionally, involved in unsaturated fatty acids biosynthesis. Catalyzes the dehydration of short chain beta-hydroxyacyl-ACPs and long chain saturated and unsaturated beta-hydroxyacyl-ACPs. This Alkaliphilus metalliredigens (strain QYMF) protein is 3-hydroxyacyl-[acyl-carrier-protein] dehydratase FabZ.